The following is a 300-amino-acid chain: DNA packaging protein OPG160 (300 aa).

The protein belongs to the orthopoxvirus OPG160 protein family. As to quaternary structure, interacts with protein OPG137.

Functionally, participates in viral DNA packaging and virion morphogenesis. The polypeptide is DNA packaging protein OPG160 (OPG160) (Monkeypox virus).